Consider the following 195-residue polypeptide: Glutathione S-transferase class-mu 26 kDa isozyme (195 aa).

Positions Met-1–Gly-83 constitute a GST N-terminal domain. Residues Tyr-7–Trp-8, Trp-41–Lys-45, Asn-54–Leu-55, and Gln-67–Ser-68 each bind glutathione. Residues Cys-85 to Lys-195 form the GST C-terminal domain. Tyr-111 serves as a coordination point for substrate.

It belongs to the GST superfamily. Mu family. Homodimer.

The enzyme catalyses RX + glutathione = an S-substituted glutathione + a halide anion + H(+). Its function is as follows. Conjugation of reduced glutathione to a wide number of exogenous and endogenous hydrophobic electrophiles. Functionally, GST isoenzymes appear to play a central role in the parasite detoxification system. Other functions are also suspected including a role in increasing the solubility of haematin in the parasite gut. The sequence is that of Glutathione S-transferase class-mu 26 kDa isozyme from Schistosoma mansoni (Blood fluke).